A 546-amino-acid chain; its full sequence is Probable malate:quinone oxidoreductase (546 aa).

It belongs to the MQO family. It depends on FAD as a cofactor.

It carries out the reaction (S)-malate + a quinone = a quinol + oxaloacetate. Its pathway is carbohydrate metabolism; tricarboxylic acid cycle; oxaloacetate from (S)-malate (quinone route): step 1/1. The sequence is that of Probable malate:quinone oxidoreductase from Acinetobacter baumannii (strain AB0057).